The following is a 375-amino-acid chain: D-apiose dehydrogenase (375 aa).

29 to 30 is a binding site for NAD(+); sequence FF. Positions 38, 39, 41, and 44 each coordinate Mg(2+). NAD(+) contacts are provided by residues Asp51, Ser93, 111 to 112, Asn140, and 179 to 181; these read QK and QPY. Lys112 is a substrate binding site. Residues Gln179, Asp192, His196, and Tyr246 each coordinate substrate.

It belongs to the Gfo/Idh/MocA family.

The catalysed reaction is D-apiofuranose + NAD(+) = D-apionolactone + NADH + H(+). It participates in carbohydrate metabolism. Functionally, involved in catabolism of D-apiose. Catalyzes oxidation of D-apiose to D-apionolactone. This is D-apiose dehydrogenase from Paraburkholderia graminis (strain ATCC 700544 / DSM 17151 / LMG 18924 / NCIMB 13744 / C4D1M).